The following is a 358-amino-acid chain: MTYNLKKYIRTDLEDFAGYSACKAPELVKTSKLIIKLDANENLYGAAPTVRQAMAEFNQYHIYPDATQSEIRRLLSEYTGVAVEQIVCGAGSDQLIDLLLRLFINPGDEVINCPPTFAMYKFYTELNRGKIVNVPRDASYNINIAAINNAITPQTKLIFIAAPNNPTGTAISKEEIRQILDLGVPTVVDEAYYEFTGQTMVSDMSKYPNLMILRTFSKWAGLAGLRVGYGLFPPIIADYLSRIKDPYSVNIAADAAIRQTMLQREYMLETVKKIVNERQRLYTELSKFGWLKPYPSVANFILCKLLKGKAKEVQHELESKGILVRCFDAPMMENCLRFSVGKPEDTDGLLKALGEMGE.

An N6-(pyridoxal phosphate)lysine modification is found at Lys-218.

The protein belongs to the class-II pyridoxal-phosphate-dependent aminotransferase family. Histidinol-phosphate aminotransferase subfamily. Homodimer. It depends on pyridoxal 5'-phosphate as a cofactor.

It catalyses the reaction L-histidinol phosphate + 2-oxoglutarate = 3-(imidazol-4-yl)-2-oxopropyl phosphate + L-glutamate. It functions in the pathway amino-acid biosynthesis; L-histidine biosynthesis; L-histidine from 5-phospho-alpha-D-ribose 1-diphosphate: step 7/9. The protein is Histidinol-phosphate aminotransferase of Dehalococcoides mccartyi (strain CBDB1).